The primary structure comprises 408 residues: Aminoacylase-1 (408 aa).

Histidine 80 provides a ligand contact to Zn(2+). Aspartate 82 is a catalytic residue. A Zn(2+)-binding site is contributed by aspartate 113. Catalysis depends on glutamate 147, which acts as the Proton acceptor. Residues glutamate 148, glutamate 175, and histidine 373 each contribute to the Zn(2+) site.

The protein belongs to the peptidase M20A family. Homodimer. Interacts with SPHK1. Zn(2+) serves as cofactor.

The protein localises to the cytoplasm. It catalyses the reaction an N-acyl-L-amino acid + H2O = an L-alpha-amino acid + a carboxylate. The catalysed reaction is N-acetyl-L-methionine + H2O = L-methionine + acetate. It carries out the reaction N-acetyl-L-glutamine + H2O = L-glutamine + acetate. Functionally, catalyzes the hydrolysis of N-acetylated amino acids to acetate and free amino acids. The sequence is that of Aminoacylase-1 (Acy1) from Mus musculus (Mouse).